The sequence spans 236 residues: 2-C-methyl-D-erythritol 4-phosphate cytidylyltransferase (236 aa).

The protein belongs to the IspD/TarI cytidylyltransferase family. IspD subfamily. In terms of assembly, homodimer.

The enzyme catalyses 2-C-methyl-D-erythritol 4-phosphate + CTP + H(+) = 4-CDP-2-C-methyl-D-erythritol + diphosphate. It functions in the pathway isoprenoid biosynthesis; isopentenyl diphosphate biosynthesis via DXP pathway; isopentenyl diphosphate from 1-deoxy-D-xylulose 5-phosphate: step 2/6. Catalyzes the formation of 4-diphosphocytidyl-2-C-methyl-D-erythritol from CTP and 2-C-methyl-D-erythritol 4-phosphate (MEP). This is 2-C-methyl-D-erythritol 4-phosphate cytidylyltransferase from Escherichia fergusonii (strain ATCC 35469 / DSM 13698 / CCUG 18766 / IAM 14443 / JCM 21226 / LMG 7866 / NBRC 102419 / NCTC 12128 / CDC 0568-73).